A 126-amino-acid polypeptide reads, in one-letter code: uncharacterized protein (126 aa).

The HIT domain occupies 19 to 126; that stretch reads IFERIIEGAV…LGGGLLGSIA (108 aa). The Histidine triad motif motif lies at 111–115; sequence HLHIH.

This is an uncharacterized protein from Chlamydia muridarum (strain MoPn / Nigg).